The chain runs to 145 residues: D-aminoacyl-tRNA deacylase (145 aa).

The short motif at 137 to 138 (GP) is the Gly-cisPro motif, important for rejection of L-amino acids element.

This sequence belongs to the DTD family. In terms of assembly, homodimer.

The protein localises to the cytoplasm. It carries out the reaction glycyl-tRNA(Ala) + H2O = tRNA(Ala) + glycine + H(+). The catalysed reaction is a D-aminoacyl-tRNA + H2O = a tRNA + a D-alpha-amino acid + H(+). Its function is as follows. An aminoacyl-tRNA editing enzyme that deacylates mischarged D-aminoacyl-tRNAs. Also deacylates mischarged glycyl-tRNA(Ala), protecting cells against glycine mischarging by AlaRS. Acts via tRNA-based rather than protein-based catalysis; rejects L-amino acids rather than detecting D-amino acids in the active site. By recycling D-aminoacyl-tRNA to D-amino acids and free tRNA molecules, this enzyme counteracts the toxicity associated with the formation of D-aminoacyl-tRNA entities in vivo and helps enforce protein L-homochirality. The chain is D-aminoacyl-tRNA deacylase from Legionella pneumophila (strain Lens).